The sequence spans 477 residues: ATP synthase subunit beta (477 aa).

148 to 155 (GGAGVGKT) contributes to the ATP binding site.

It belongs to the ATPase alpha/beta chains family. F-type ATPases have 2 components, CF(1) - the catalytic core - and CF(0) - the membrane proton channel. CF(1) has five subunits: alpha(3), beta(3), gamma(1), delta(1), epsilon(1). CF(0) has three main subunits: a(1), b(2) and c(9-12). The alpha and beta chains form an alternating ring which encloses part of the gamma chain. CF(1) is attached to CF(0) by a central stalk formed by the gamma and epsilon chains, while a peripheral stalk is formed by the delta and b chains.

The protein localises to the cell inner membrane. It catalyses the reaction ATP + H2O + 4 H(+)(in) = ADP + phosphate + 5 H(+)(out). Its function is as follows. Produces ATP from ADP in the presence of a proton gradient across the membrane. The catalytic sites are hosted primarily by the beta subunits. This chain is ATP synthase subunit beta, found in Psychrobacter arcticus (strain DSM 17307 / VKM B-2377 / 273-4).